The following is a 335-amino-acid chain: Geranylgeranyl pyrophosphate synthase BTS1 (335 aa).

Residues Lys36, Arg39, and His68 each coordinate isopentenyl diphosphate. Positions 75 and 79 each coordinate Mg(2+). Arg84 provides a ligand contact to dimethylallyl diphosphate. Arg85 contributes to the isopentenyl diphosphate binding site. Dimethylallyl diphosphate contacts are provided by Lys169, Thr170, Gln206, Asn213, Lys223, and Lys233.

It belongs to the FPP/GGPP synthase family. The cofactor is Mg(2+).

Its subcellular location is the cytoplasm. The enzyme catalyses isopentenyl diphosphate + dimethylallyl diphosphate = (2E)-geranyl diphosphate + diphosphate. It carries out the reaction isopentenyl diphosphate + (2E)-geranyl diphosphate = (2E,6E)-farnesyl diphosphate + diphosphate. It catalyses the reaction isopentenyl diphosphate + (2E,6E)-farnesyl diphosphate = (2E,6E,10E)-geranylgeranyl diphosphate + diphosphate. It functions in the pathway isoprenoid biosynthesis; farnesyl diphosphate biosynthesis; farnesyl diphosphate from geranyl diphosphate and isopentenyl diphosphate: step 1/1. The protein operates within isoprenoid biosynthesis; geranyl diphosphate biosynthesis; geranyl diphosphate from dimethylallyl diphosphate and isopentenyl diphosphate: step 1/1. Its pathway is isoprenoid biosynthesis; geranylgeranyl diphosphate biosynthesis; geranylgeranyl diphosphate from farnesyl diphosphate and isopentenyl diphosphate: step 1/1. Its function is as follows. Catalyzes the trans-addition of the 3 molecules of IPP onto DMAPP to form geranylgeranyl pyrophosphate. Required for the membrane attachment of YPT1 and SEC4. May be involved in vesicle trafficking and protein sorting. This is Geranylgeranyl pyrophosphate synthase BTS1 (BTS1) from Saccharomyces cerevisiae (strain ATCC 204508 / S288c) (Baker's yeast).